The primary structure comprises 552 residues: Steroid transmembrane transporter SLC22A24 (552 aa).

Helical transmembrane passes span 16–36 (FQIC…PNIV), 146–166 (SMVQ…YGHL), 178–200 (LCFL…LVYC), 204–226 (FLAG…EWTL), 234–254 (IMVL…LAFA), 260–280 (ILQL…WKMV), 350–370 (VFGL…LILN), 380–400 (LFQI…LLTL), 407–427 (ISQI…TFLP), 435–455 (VVLA…ASVH), 474–492 (VSGR…LMAY), and 496–516 (LPWI…LLLP).

It belongs to the major facilitator (TC 2.A.1) superfamily. Organic cation transporter (TC 2.A.1.19) family. In terms of tissue distribution, localized to the kidney. Highly specific expression pattern in the nephron, localized to segment 3 of the proximal tubule.

The protein localises to the cell membrane. The enzyme catalyses estrone 3-sulfate(out) + glutarate(in) = estrone 3-sulfate(in) + glutarate(out). It carries out the reaction 17beta-estradiol 17-O-(beta-D-glucuronate)(out) + glutarate(in) = 17beta-estradiol 17-O-(beta-D-glucuronate)(in) + glutarate(out). The catalysed reaction is taurocholate(out) + glutarate(in) = taurocholate(in) + glutarate(out). It catalyses the reaction 5alpha-androstane-3alpha,17beta-diol 3-O-(beta-D-glucuronate)(out) + glutarate(in) = 5alpha-androstane-3alpha,17beta-diol 3-O-(beta-D-glucuronate)(in) + glutarate(out). The enzyme catalyses glycocholate(out) + glutarate(in) = glycocholate(in) + glutarate(out). It carries out the reaction dehydroepiandrosterone 3-sulfate(out) + glutarate(in) = dehydroepiandrosterone 3-sulfate(in) + glutarate(out). The catalysed reaction is glutarate(in) + succinate(out) = glutarate(out) + succinate(in). With respect to regulation, transport is chloride sensitive and transtimulated by glutaric acid. Transport is inhibited by anionic compounds from different chemical classes. Its function is as follows. Renal transmembrane organic anion/dicarboxylate exchanger that participates in the reabsorption of conjugated steroids including estradiol-17beta-D-glucuronide (or 17beta-estradiol 17-O-(beta-D-glucuronate)), androstanediol glucuronide (or 5alpha-androstane-3alpha,17beta-diol 3-O-(beta-D-glucuronate)), and estrone 3-sulfate, as well as bile acids taurocholate and glycocholate, driven by an outward gradient of dicarboxylates such as glutarate or succinate. Similar uptake function as Isoform 1. In terms of biological role, lack of transporter activity. This chain is Steroid transmembrane transporter SLC22A24, found in Homo sapiens (Human).